A 319-amino-acid polypeptide reads, in one-letter code: Beta-ketoacyl-[acyl-carrier-protein] synthase III (319 aa).

Active-site residues include C115 and H246. The tract at residues 247–251 (QANLR) is ACP-binding. N276 is an active-site residue.

Belongs to the thiolase-like superfamily. FabH family. In terms of assembly, homodimer.

The protein resides in the cytoplasm. It carries out the reaction malonyl-[ACP] + acetyl-CoA + H(+) = 3-oxobutanoyl-[ACP] + CO2 + CoA. Its pathway is lipid metabolism; fatty acid biosynthesis. Its function is as follows. Catalyzes the condensation reaction of fatty acid synthesis by the addition to an acyl acceptor of two carbons from malonyl-ACP. Catalyzes the first condensation reaction which initiates fatty acid synthesis and may therefore play a role in governing the total rate of fatty acid production. Possesses both acetoacetyl-ACP synthase and acetyl transacylase activities. Its substrate specificity determines the biosynthesis of branched-chain and/or straight-chain of fatty acids. In Coxiella burnetii (strain RSA 493 / Nine Mile phase I), this protein is Beta-ketoacyl-[acyl-carrier-protein] synthase III.